The chain runs to 927 residues: Bifunctional glutamine synthetase adenylyltransferase/adenylyl-removing enzyme (927 aa).

Residues 1–428 (MTMTDASDLL…AQFDQVFADK (428 aa)) form an adenylyl removase region. The tract at residues 438–927 (DQAAGCIWSG…AALWARVFGA (490 aa)) is adenylyl transferase.

This sequence belongs to the GlnE family. Requires Mg(2+) as cofactor.

The enzyme catalyses [glutamine synthetase]-O(4)-(5'-adenylyl)-L-tyrosine + phosphate = [glutamine synthetase]-L-tyrosine + ADP. It catalyses the reaction [glutamine synthetase]-L-tyrosine + ATP = [glutamine synthetase]-O(4)-(5'-adenylyl)-L-tyrosine + diphosphate. Its function is as follows. Involved in the regulation of glutamine synthetase GlnA, a key enzyme in the process to assimilate ammonia. When cellular nitrogen levels are high, the C-terminal adenylyl transferase (AT) inactivates GlnA by covalent transfer of an adenylyl group from ATP to specific tyrosine residue of GlnA, thus reducing its activity. Conversely, when nitrogen levels are low, the N-terminal adenylyl removase (AR) activates GlnA by removing the adenylyl group by phosphorolysis, increasing its activity. The regulatory region of GlnE binds the signal transduction protein PII (GlnB) which indicates the nitrogen status of the cell. The chain is Bifunctional glutamine synthetase adenylyltransferase/adenylyl-removing enzyme from Burkholderia pseudomallei (strain K96243).